The sequence spans 72 residues: Defensin 3 (72 aa).

The first 25 residues, 1–25 (MEKKMAGFCIFFLVLFLAQEYGVEG), serve as a signal peptide directing secretion. Intrachain disulfides connect cysteine 28–cysteine 72, cysteine 39–cysteine 60, and cysteine 45–cysteine 66.

This sequence belongs to the DEFL family. In terms of assembly, may form dimers. Not glycosylated. Post-translationally, has 4 disulfide bonds.

Functionally, probably has antifungal activity. The protein is Defensin 3 of Arachis hypogaea (Peanut).